A 359-amino-acid chain; its full sequence is Small ribosomal subunit biogenesis GTPase RsgA (359 aa).

The CP-type G domain maps to 101 to 259; it reads KRKGSQAIAS…LMDNPGIREV (159 aa). GTP contacts are provided by residues 149 to 152 and 201 to 209; these read NKKD and GSSGAGKST. Residues cysteine 284, cysteine 289, histidine 291, and cysteine 297 each coordinate Zn(2+). The tract at residues 331 to 359 is disordered; that stretch reads DPEEARKKKQKDKQMSKALQKRLKDKGRK. A compositionally biased stretch (basic residues) spans 349 to 359; that stretch reads LQKRLKDKGRK.

Belongs to the TRAFAC class YlqF/YawG GTPase family. RsgA subfamily. As to quaternary structure, monomer. Associates with 30S ribosomal subunit, binds 16S rRNA. Zn(2+) is required as a cofactor.

It localises to the cytoplasm. Functionally, one of several proteins that assist in the late maturation steps of the functional core of the 30S ribosomal subunit. Helps release RbfA from mature subunits. May play a role in the assembly of ribosomal proteins into the subunit. Circularly permuted GTPase that catalyzes slow GTP hydrolysis, GTPase activity is stimulated by the 30S ribosomal subunit. The chain is Small ribosomal subunit biogenesis GTPase RsgA from Leptospira interrogans serogroup Icterohaemorrhagiae serovar Lai (strain 56601).